The chain runs to 353 residues: sn-glycerol-3-phosphate import ATP-binding protein UgpC (353 aa).

The ABC transporter domain occupies 4–234 (ILLNDVRKSY…PASEFVAGFI (231 aa)). Residue 36–43 (GPSGCGKS) participates in ATP binding.

It belongs to the ABC transporter superfamily. sn-glycerol-3-phosphate importer (TC 3.A.1.1.3) family. The complex is composed of two ATP-binding proteins (UgpC), two transmembrane proteins (UgpA and UgpE) and a solute-binding protein (UgpB).

The protein resides in the cell inner membrane. The enzyme catalyses sn-glycerol 3-phosphate(out) + ATP + H2O = sn-glycerol 3-phosphate(in) + ADP + phosphate + H(+). In terms of biological role, part of the ABC transporter complex UgpBAEC involved in sn-glycerol-3-phosphate (G3P) import. Responsible for energy coupling to the transport system. This is sn-glycerol-3-phosphate import ATP-binding protein UgpC from Paracoccus denitrificans (strain Pd 1222).